Consider the following 215-residue polypeptide: Thiamine-phosphate synthase (215 aa).

Residues 43–47 (QLRDK) and Asn-75 each bind 4-amino-2-methyl-5-(diphosphooxymethyl)pyrimidine. Residues Asp-76 and Asp-95 each coordinate Mg(2+). Ser-114 is a binding site for 4-amino-2-methyl-5-(diphosphooxymethyl)pyrimidine. 141–143 (TPT) is a 2-[(2R,5Z)-2-carboxy-4-methylthiazol-5(2H)-ylidene]ethyl phosphate binding site. Lys-144 is a binding site for 4-amino-2-methyl-5-(diphosphooxymethyl)pyrimidine. Gly-172 is a binding site for 2-[(2R,5Z)-2-carboxy-4-methylthiazol-5(2H)-ylidene]ethyl phosphate.

This sequence belongs to the thiamine-phosphate synthase family. Mg(2+) is required as a cofactor.

It catalyses the reaction 2-[(2R,5Z)-2-carboxy-4-methylthiazol-5(2H)-ylidene]ethyl phosphate + 4-amino-2-methyl-5-(diphosphooxymethyl)pyrimidine + 2 H(+) = thiamine phosphate + CO2 + diphosphate. The catalysed reaction is 2-(2-carboxy-4-methylthiazol-5-yl)ethyl phosphate + 4-amino-2-methyl-5-(diphosphooxymethyl)pyrimidine + 2 H(+) = thiamine phosphate + CO2 + diphosphate. The enzyme catalyses 4-methyl-5-(2-phosphooxyethyl)-thiazole + 4-amino-2-methyl-5-(diphosphooxymethyl)pyrimidine + H(+) = thiamine phosphate + diphosphate. It functions in the pathway cofactor biosynthesis; thiamine diphosphate biosynthesis; thiamine phosphate from 4-amino-2-methyl-5-diphosphomethylpyrimidine and 4-methyl-5-(2-phosphoethyl)-thiazole: step 1/1. Condenses 4-methyl-5-(beta-hydroxyethyl)thiazole monophosphate (THZ-P) and 2-methyl-4-amino-5-hydroxymethyl pyrimidine pyrophosphate (HMP-PP) to form thiamine monophosphate (TMP). The polypeptide is Thiamine-phosphate synthase (Streptomyces avermitilis (strain ATCC 31267 / DSM 46492 / JCM 5070 / NBRC 14893 / NCIMB 12804 / NRRL 8165 / MA-4680)).